A 446-amino-acid chain; its full sequence is Delta(8)-fatty-acid desaturase (446 aa).

A Cytochrome b5 heme-binding domain is found at 5–89 (KKYISVGELE…LEDYLVSEIS (85 aa)). Heme contacts are provided by His-40 and His-63. 2 helical membrane-spanning segments follow: residues 112–132 (VIYCLSFIALLLCGCVYGVLC) and 136–156 (LWVHMLSGAMLGMCFIQAAYL). The Histidine box-1 signature appears at 158-162 (HDSGH). The next 4 membrane-spanning stretches (helical) occupy residues 174–195 (FAQVLNGNCLTGISIAWWKWTH), 253–273 (IYLVMIFGRINLYVQTFLLLF), 282–302 (ALNIIGILVYWTWFPYLVSCL), and 309–329 (VLFVLTCFSVTALQHIQFTLN). A Histidine box-2 motif is present at residues 195–199 (HNAHH). A Histidine box-3 motif is present at residues 372–376 (QLEHH).

It belongs to the fatty acid desaturase type 1 family. Requires Fe cation as cofactor. In terms of tissue distribution, expressed only in young leaves.

The protein localises to the membrane. It catalyses the reaction an N-acyl-(4R)-4-hydroxysphinganine + 2 Fe(II)-[cytochrome b5] + O2 + 2 H(+) = a (4R,8E)-4-hydroxysphingenine ceramide + 2 Fe(III)-[cytochrome b5] + 2 H2O. It carries out the reaction an N-acyl-(4R)-4-hydroxysphinganine + 2 Fe(II)-[cytochrome b5] + O2 + 2 H(+) = a (4R,8Z)-4-hydroxysphing-8-enine ceramide + 2 Fe(III)-[cytochrome b5] + 2 H2O. Its function is as follows. Plays a major role as delta(8)-fatty-acid desaturase which introduces a double bond at the 8-position in the long-chain base (LCB) of ceramides with or without a hydroxy group at the 4-position. The enzyme produces both the 8E and 8Z isomers (in a 4:1 ratio). This structural modification contributes to the quantitative partitioning of ceramides between the two major sphingolipid classes, glucosylceramides and glycosylinositolphosphoryl ceramides. Sphingolipids are important membrane components involved in environmental stress responses, such as resistance to chilling, and act as cell signaling molecules. In Borago officinalis (Bourrache), this protein is Delta(8)-fatty-acid desaturase (sld1).